We begin with the raw amino-acid sequence, 161 residues long: Pro-corazonin (161 aa).

The signal sequence occupies residues 1–20 (MMRLLLLPLFLFTLSMACMG). Position 21 is a pyrrolidone carboxylic acid (Gln21). Asn31 is modified (asparagine amide). Residues 70–161 (LERCLAQLQR…SGEPSVFGKH (92 aa)) constitute a propeptide that is removed on maturation. Disordered regions lie at residues 93 to 125 (NANR…TPIQ) and 142 to 161 (VAGS…FGKH). Positions 102 to 117 (SDSGSSRNRANNNNEN) are enriched in low complexity.

This sequence belongs to the corazonin family.

The protein localises to the secreted. In terms of biological role, cardioactive peptide. Corazonin is probably involved in the physiological regulation of the heart beat. Clock (Clk) and cycle (cyc) proteins negatively regulate Crz transcription in a cell-specific manner. This is Pro-corazonin from Drosophila pseudoobscura pseudoobscura (Fruit fly).